Consider the following 95-residue polypeptide: Small ribosomal subunit protein mS37 (95 aa).

The CHCH domain maps to 27 to 69 (ANKCLVLMSNLLQCWSSYGHMSPKCAGLVTELKSCTSESALGK). Short sequence motifs (cx9C motif) lie at residues 30 to 40 (CLVLMSNLLQC) and 51 to 61 (CAGLVTELKSC). Intrachain disulfides connect Cys30-Cys61 and Cys40-Cys51.

The protein belongs to the mitochondrion-specific ribosomal protein mS37 family. As to quaternary structure, component of the mitochondrial small ribosomal subunit (mt-SSU). Mature yeast 74S mitochondrial ribosomes consist of a small (37S) and a large (54S) subunit. The 37S small subunit contains a 15S ribosomal RNA (15S mt-rRNA) and 34 different proteins. The 54S large subunit contains a 21S rRNA (21S mt-rRNA) and 46 different proteins.

The protein resides in the mitochondrion. Its subcellular location is the mitochondrion matrix. Component of the mitochondrial ribosome (mitoribosome), a dedicated translation machinery responsible for the synthesis of mitochondrial genome-encoded proteins, including at least some of the essential transmembrane subunits of the mitochondrial respiratory chain. The mitoribosomes are attached to the mitochondrial inner membrane and translation products are cotranslationally integrated into the membrane. The protein is Small ribosomal subunit protein mS37 (MRP10) of Saccharomyces cerevisiae (strain ATCC 204508 / S288c) (Baker's yeast).